Here is a 381-residue protein sequence, read N- to C-terminus: Outer membrane protein assembly factor BamB (381 aa).

Residues 1–22 (MNLLKRYAAPVACAAAVLVFAA) form the signal peptide. Cysteine 23 is lipidated: N-palmitoyl cysteine. Cysteine 23 is lipidated: S-diacylglycerol cysteine.

This sequence belongs to the BamB family. In terms of assembly, part of the Bam complex.

It localises to the cell outer membrane. Functionally, part of the outer membrane protein assembly complex, which is involved in assembly and insertion of beta-barrel proteins into the outer membrane. In Burkholderia pseudomallei (strain K96243), this protein is Outer membrane protein assembly factor BamB.